Reading from the N-terminus, the 308-residue chain is Aspartate carbamoyltransferase catalytic subunit (308 aa).

Residues Arg58 and Thr59 each contribute to the carbamoyl phosphate site. Position 86 (Lys86) interacts with L-aspartate. Positions 108, 136, and 139 each coordinate carbamoyl phosphate. Residues Arg169 and Arg227 each contribute to the L-aspartate site. Carbamoyl phosphate is bound by residues Gly268 and Pro269.

It belongs to the aspartate/ornithine carbamoyltransferase superfamily. ATCase family. As to quaternary structure, heterododecamer (2C3:3R2) of six catalytic PyrB chains organized as two trimers (C3), and six regulatory PyrI chains organized as three dimers (R2).

It carries out the reaction carbamoyl phosphate + L-aspartate = N-carbamoyl-L-aspartate + phosphate + H(+). The protein operates within pyrimidine metabolism; UMP biosynthesis via de novo pathway; (S)-dihydroorotate from bicarbonate: step 2/3. Its function is as follows. Catalyzes the condensation of carbamoyl phosphate and aspartate to form carbamoyl aspartate and inorganic phosphate, the committed step in the de novo pyrimidine nucleotide biosynthesis pathway. The chain is Aspartate carbamoyltransferase catalytic subunit from Chloroflexus aggregans (strain MD-66 / DSM 9485).